A 550-amino-acid chain; its full sequence is O-phosphoserine--tRNA(Cys) ligase (550 aa).

Residues methionine 1–glutamate 32 form a disordered region. Substrate-binding positions include histidine 212–threonine 214, serine 257–serine 259, tyrosine 299–tyrosine 300, and asparagine 342.

The protein belongs to the class-II aminoacyl-tRNA synthetase family. O-phosphoseryl-tRNA(Cys) synthetase subfamily. Homotetramer. Interacts with SepCysS.

It catalyses the reaction tRNA(Cys) + O-phospho-L-serine + ATP = O-phospho-L-seryl-tRNA(Cys) + AMP + diphosphate. Catalyzes the attachment of O-phosphoserine (Sep) to tRNA(Cys). The chain is O-phosphoserine--tRNA(Cys) ligase from Methanoregula boonei (strain DSM 21154 / JCM 14090 / 6A8).